A 74-amino-acid polypeptide reads, in one-letter code: ATP synthase subunit c (74 aa).

The next 2 membrane-spanning stretches (helical) occupy residues 5–25 and 49–69; these read LAHI…IGVG and LFIG…VALL.

Belongs to the ATPase C chain family. F-type ATPases have 2 components, F(1) - the catalytic core - and F(0) - the membrane proton channel. F(1) has five subunits: alpha(3), beta(3), gamma(1), delta(1), epsilon(1). F(0) has three main subunits: a(1), b(2) and c(10-14). The alpha and beta chains form an alternating ring which encloses part of the gamma chain. F(1) is attached to F(0) by a central stalk formed by the gamma and epsilon chains, while a peripheral stalk is formed by the delta and b chains.

The protein resides in the cell inner membrane. Its function is as follows. F(1)F(0) ATP synthase produces ATP from ADP in the presence of a proton or sodium gradient. F-type ATPases consist of two structural domains, F(1) containing the extramembraneous catalytic core and F(0) containing the membrane proton channel, linked together by a central stalk and a peripheral stalk. During catalysis, ATP synthesis in the catalytic domain of F(1) is coupled via a rotary mechanism of the central stalk subunits to proton translocation. In terms of biological role, key component of the F(0) channel; it plays a direct role in translocation across the membrane. A homomeric c-ring of between 10-14 subunits forms the central stalk rotor element with the F(1) delta and epsilon subunits. This Ruegeria pomeroyi (strain ATCC 700808 / DSM 15171 / DSS-3) (Silicibacter pomeroyi) protein is ATP synthase subunit c.